Consider the following 266-residue polypeptide: rRNA adenine N-6-methyltransferase (266 aa).

Residues His-14, Thr-16, Gly-41, Glu-62, Asp-87, and Asn-103 each coordinate S-adenosyl-L-methionine.

Belongs to the class I-like SAM-binding methyltransferase superfamily. rRNA adenine N(6)-methyltransferase family.

Its function is as follows. Involved in erythromycin resistance. The polypeptide is rRNA adenine N-6-methyltransferase (ermFU) (Bacteroides fragilis).